The sequence spans 400 residues: Formate-dependent phosphoribosylglycinamide formyltransferase (400 aa).

N(1)-(5-phospho-beta-D-ribosyl)glycinamide-binding positions include 21–22 (EL) and Glu81. Residues Arg114, Lys155, 160–165 (SSGKGQ), 195–198 (EGRI), and Glu203 each bind ATP. Positions 119 to 313 (RLAAEKLGLP…EFELHVRAIL (195 aa)) constitute an ATP-grasp domain. Mg(2+) contacts are provided by Glu272 and Glu284. N(1)-(5-phospho-beta-D-ribosyl)glycinamide contacts are provided by residues Asp291, Lys360, and 367–368 (RR).

It belongs to the PurK/PurT family. Homodimer.

The enzyme catalyses N(1)-(5-phospho-beta-D-ribosyl)glycinamide + formate + ATP = N(2)-formyl-N(1)-(5-phospho-beta-D-ribosyl)glycinamide + ADP + phosphate + H(+). Its pathway is purine metabolism; IMP biosynthesis via de novo pathway; N(2)-formyl-N(1)-(5-phospho-D-ribosyl)glycinamide from N(1)-(5-phospho-D-ribosyl)glycinamide (formate route): step 1/1. Involved in the de novo purine biosynthesis. Catalyzes the transfer of formate to 5-phospho-ribosyl-glycinamide (GAR), producing 5-phospho-ribosyl-N-formylglycinamide (FGAR). Formate is provided by PurU via hydrolysis of 10-formyl-tetrahydrofolate. This is Formate-dependent phosphoribosylglycinamide formyltransferase from Methylococcus capsulatus (strain ATCC 33009 / NCIMB 11132 / Bath).